A 96-amino-acid chain; its full sequence is Protein Vpr (96 aa).

A homooligomerization region spans residues 1–42; the sequence is MEQAPEDQGPQREPHNEWTLELLEELKNEAVRHFPRIWLHGL. A phosphoserine; by host mark is found at serine 79, serine 94, and serine 96.

Belongs to the HIV-1 VPR protein family. As to quaternary structure, homooligomer, may form homodimer. Interacts with p6-gag region of the Pr55 Gag precursor protein through a (Leu-X-X)4 motif near the C-terminus of the P6gag protein. Interacts with host UNG. May interact with host RAD23A/HHR23A. Interacts with host VPRBP/DCAF1, leading to hijack the CUL4A-RBX1-DDB1-DCAF1/VPRBP complex, mediating ubiquitination of host proteins such as TERT and ZGPAT and arrest of the cell cycle in G2 phase. In terms of processing, phosphorylated on several residues by host. These phosphorylations regulate VPR activity for the nuclear import of the HIV-1 pre-integration complex.

It localises to the virion. Its subcellular location is the host nucleus. The protein localises to the host extracellular space. In terms of biological role, during virus entry, plays a role in the transport of the viral pre-integration (PIC) complex to the host nucleus. This function is crucial for viral infection of non-dividing macrophages. May act directly at the nuclear pore complex, by binding nucleoporins phenylalanine-glycine (FG)-repeat regions. Its function is as follows. During virus replication, may deplete host UNG protein, and incude G2-M cell cycle arrest. Acts by targeting specific host proteins for degradation by the 26S proteasome, through association with the cellular CUL4A-DDB1 E3 ligase complex by direct interaction with host VPRPB/DCAF-1. Cell cycle arrest reportedly occurs within hours of infection and is not blocked by antiviral agents, suggesting that it is initiated by the VPR carried into the virion. Additionally, VPR induces apoptosis in a cell cycle dependent manner suggesting that these two effects are mechanistically linked. Detected in the serum and cerebrospinal fluid of AIDS patient, VPR may also induce cell death to bystander cells. This Human immunodeficiency virus type 1 group M subtype B (isolate BRU/LAI) (HIV-1) protein is Protein Vpr.